The primary structure comprises 173 residues: Small ribosomal subunit protein uS7 (173 aa).

This sequence belongs to the universal ribosomal protein uS7 family. As to quaternary structure, part of the 30S ribosomal subunit. Contacts proteins S9 and S11.

One of the primary rRNA binding proteins, it binds directly to 16S rRNA where it nucleates assembly of the head domain of the 30S subunit. Is located at the subunit interface close to the decoding center, probably blocks exit of the E-site tRNA. The chain is Small ribosomal subunit protein uS7 from Orientia tsutsugamushi (strain Boryong) (Rickettsia tsutsugamushi).